The chain runs to 384 residues: 3,7-dimethylxanthine N-methyltransferase 2 (384 aa).

8 residues coordinate S-adenosyl-L-homocysteine: Y18, C61, N66, D100, L101, S139, F140, and C156. Position 157 (Y157) interacts with theobromine. C158 is a binding site for S-adenosyl-L-homocysteine. Positions 160 and 161 each coordinate theobromine. Position 178 (N178) interacts with Mg(2+). S237 serves as a coordination point for theobromine. Mg(2+) contacts are provided by D260, F262, and N263. Y368 is a theobromine binding site.

This sequence belongs to the methyltransferase superfamily. Type-7 methyltransferase family. It depends on Mg(2+) as a cofactor. In terms of tissue distribution, highly expressed in developing endosperm. Detected in young leaves and flower buds. Present in immature fruits (grains), but barely in mature fruits.

The catalysed reaction is 7-methylxanthine + S-adenosyl-L-methionine = theobromine + S-adenosyl-L-homocysteine + H(+). It carries out the reaction theobromine + S-adenosyl-L-methionine = caffeine + S-adenosyl-L-homocysteine + H(+). The enzyme catalyses 1,7-dimethylxanthine + S-adenosyl-L-methionine = caffeine + S-adenosyl-L-homocysteine + H(+). Its pathway is alkaloid biosynthesis. Involved in the biosynthesis of caffeine. Catalyzes the conversion of 7-methylxanthine (7mX) to theobromine and of theobromine to caffeine. Has 1-N-methylation activity. This chain is 3,7-dimethylxanthine N-methyltransferase 2, found in Coffea arabica (Arabian coffee).